The chain runs to 520 residues: Ribonuclease Y 2 (520 aa).

A helical transmembrane segment spans residues 7 to 23 (VVLLLASIGVGYGLRAK). Residues 206–269 (NHRSFIAENA…AVAMETMEMI (64 aa)) form the KH domain. Residues 332-425 (ILEHSIETAK…VEAADAISGA (94 aa)) form the HD domain.

The protein belongs to the RNase Y family.

It is found in the cell membrane. Its function is as follows. Endoribonuclease that initiates mRNA decay. This Pediococcus pentosaceus (strain ATCC 25745 / CCUG 21536 / LMG 10740 / 183-1w) protein is Ribonuclease Y 2.